We begin with the raw amino-acid sequence, 503 residues long: Activin receptor type-1-like (503 aa).

A signal peptide spans 1–21 (MTLGSPRRGLLMLLMALVTQG). The Extracellular portion of the chain corresponds to 22-118 (DPVKPSRGPL…PSEQPGTDGQ (97 aa)). Cystine bridges form between cysteine 34/cysteine 51, cysteine 36/cysteine 41, and cysteine 46/cysteine 69. The tract at residues 73-76 (HREL) is mediates specificity for BMP ligand. 2 disulfides stabilise this stretch: cysteine 77/cysteine 89 and cysteine 90/cysteine 95. N-linked (GlcNAc...) asparagine glycosylation occurs at asparagine 98. Residues 119 to 141 (LALILGPVLALLALVALGVLGLW) form a helical membrane-spanning segment. The Cytoplasmic portion of the chain corresponds to 142–503 (HVRRRQEKQR…NSPEKPKVIQ (362 aa)). Phosphoserine occurs at positions 155, 160, and 161. The 30-residue stretch at 172–201 (SMLGDLLDSDCTTGSGSGLPFLVQRTVARQ) folds into the GS domain. The Protein kinase domain maps to 202–492 (VALVECVGKG…LRIKKTLQKI (291 aa)). ATP-binding positions include 208-216 (VGKGRYGEV) and lysine 229. Residue aspartate 330 is the Proton acceptor of the active site.

Belongs to the protein kinase superfamily. TKL Ser/Thr protein kinase family. TGFB receptor subfamily. In terms of assembly, interacts with TSC22D1/TSC-22. Mg(2+) is required as a cofactor. Mn(2+) serves as cofactor.

It localises to the cell membrane. It catalyses the reaction L-threonyl-[receptor-protein] + ATP = O-phospho-L-threonyl-[receptor-protein] + ADP + H(+). It carries out the reaction L-seryl-[receptor-protein] + ATP = O-phospho-L-seryl-[receptor-protein] + ADP + H(+). In terms of biological role, type I receptor for TGF-beta family ligands BMP9/GDF2 and BMP10 and important regulator of normal blood vessel development. On ligand binding, forms a receptor complex consisting of two type II and two type I transmembrane serine/threonine kinases. Type II receptors phosphorylate and activate type I receptors which autophosphorylate, then bind and activate SMAD transcriptional regulators. May bind activin as well. The protein is Activin receptor type-1-like (ACVRL1) of Pongo abelii (Sumatran orangutan).